Consider the following 408-residue polypeptide: Aminomethyltransferase, mitochondrial (408 aa).

The N-terminal 30 residues, 1–30 (MRGGLWQLGQSITRRLANGGDKKAVARRCF), are a transit peptide targeting the mitochondrion. Glutamate 235, arginine 266, and tyrosine 404 together coordinate substrate.

It belongs to the GcvT family. As to quaternary structure, the glycine cleavage system is composed of four proteins: P, T, L and H.

The protein resides in the mitochondrion. The catalysed reaction is N(6)-[(R)-S(8)-aminomethyldihydrolipoyl]-L-lysyl-[protein] + (6S)-5,6,7,8-tetrahydrofolate = N(6)-[(R)-dihydrolipoyl]-L-lysyl-[protein] + (6R)-5,10-methylene-5,6,7,8-tetrahydrofolate + NH4(+). Functionally, the glycine cleavage system catalyzes the degradation of glycine. The protein is Aminomethyltransferase, mitochondrial (GDCST) of Pisum sativum (Garden pea).